Consider the following 276-residue polypeptide: Rhomboid protease GlpG (276 aa).

Transmembrane regions (helical) follow at residues 94–114 (GPVT…MQIL), 142–162 (ALMH…WYLG), 169–189 (LGSG…GYVQ), 192–212 (FSGP…GYVW), 229–249 (LIIF…GMSM), and 250–270 (ANGA…VDSL). Serine 201 (nucleophile) is an active-site residue. Residue histidine 254 is part of the active site.

It belongs to the peptidase S54 family.

Its subcellular location is the cell inner membrane. The enzyme catalyses Cleaves type-1 transmembrane domains using a catalytic dyad composed of serine and histidine that are contributed by different transmembrane domains.. Its function is as follows. Rhomboid-type serine protease that catalyzes intramembrane proteolysis. This Escherichia coli O45:K1 (strain S88 / ExPEC) protein is Rhomboid protease GlpG.